The sequence spans 602 residues: Elongation factor 4 (602 aa).

Residues D6–G188 form the tr-type G domain. Residues D18–T23 and N135–D138 contribute to the GTP site.

This sequence belongs to the TRAFAC class translation factor GTPase superfamily. Classic translation factor GTPase family. LepA subfamily.

It is found in the cell membrane. The enzyme catalyses GTP + H2O = GDP + phosphate + H(+). Its function is as follows. Required for accurate and efficient protein synthesis under certain stress conditions. May act as a fidelity factor of the translation reaction, by catalyzing a one-codon backward translocation of tRNAs on improperly translocated ribosomes. Back-translocation proceeds from a post-translocation (POST) complex to a pre-translocation (PRE) complex, thus giving elongation factor G a second chance to translocate the tRNAs correctly. Binds to ribosomes in a GTP-dependent manner. This is Elongation factor 4 from Desulforudis audaxviator (strain MP104C).